The chain runs to 262 residues: Triosephosphate isomerase (262 aa).

Substrate is bound at residue 13–15 (NWK). His-103 (electrophile) is an active-site residue. Catalysis depends on Glu-175, which acts as the Proton acceptor. Residues Gly-181, Ser-221, and 242 to 243 (GG) each bind substrate.

This sequence belongs to the triosephosphate isomerase family. In terms of assembly, homodimer.

The protein resides in the cytoplasm. It catalyses the reaction D-glyceraldehyde 3-phosphate = dihydroxyacetone phosphate. The protein operates within carbohydrate biosynthesis; gluconeogenesis. It participates in carbohydrate degradation; glycolysis; D-glyceraldehyde 3-phosphate from glycerone phosphate: step 1/1. Involved in the gluconeogenesis. Catalyzes stereospecifically the conversion of dihydroxyacetone phosphate (DHAP) to D-glyceraldehyde-3-phosphate (G3P). The sequence is that of Triosephosphate isomerase from Corynebacterium efficiens (strain DSM 44549 / YS-314 / AJ 12310 / JCM 11189 / NBRC 100395).